We begin with the raw amino-acid sequence, 153 residues long: MNVGVAHSEVNPNTRVMNSRGIWLAYIILVGLLHVVLLSIPFFSIPVVWTLTNVIHNLAMYIFLHTVKGTPFETPDQGKARLLTHWEQMDYGLQFTSSRKFLSISPIVLYLLASFYTKYDAAHFLINTASLLSVLLPKLPQFHGVRLFGINKY.

Over 1–21 the chain is Cytoplasmic; that stretch reads MNVGVAHSEVNPNTRVMNSRG. Helical transmembrane passes span 22 to 42 and 43 to 63; these read IWLAYIILVGLLHVVLLSIPF and FSIPVVWTLTNVIHNLAMYIF. Residues 64-105 are Cytoplasmic-facing; it reads LHTVKGTPFETPDQGKARLLTHWEQMDYGLQFTSSRKFLSIS. A helical membrane pass occupies residues 106-126; that stretch reads PIVLYLLASFYTKYDAAHFLI. At 127 to 153 the chain is on the extracellular side; the sequence is NTASLLSVLLPKLPQFHGVRLFGINKY.

It belongs to the ORM family. As to quaternary structure, ceramide-sensitive subunit of the serine palmitoyltransferase (SPT) complex, which is also composed of SPTLC1, SPTLC2/3 and SPTSSA/B.

The protein localises to the endoplasmic reticulum membrane. Plays an essential role in the homeostatic regulation of sphingolipid de novo biosynthesis by modulating the activity of the serine palmitoyltransferase (SPT) in response to ceramide levels. When complexed to SPT, the binding of ceramides to its N-terminus stabilizes a conformation that block SPT substrate entry, hence preventing SPT catalytic activity. Through this mechanism, maintains ceramide levels at sufficient concentrations for the production of complex sphingolipids, but which prevents the accumulation of ceramides to levels that trigger apoptosis. The sequence is that of ORM1-like protein 2 (Ormdl2) from Mus musculus (Mouse).